The primary structure comprises 200 residues: Protein Syd (200 aa).

This sequence belongs to the Syd family.

The protein localises to the cell inner membrane. Its function is as follows. Interacts with the SecY protein in vivo. May bind preferentially to an uncomplexed state of SecY, thus functioning either as a chelating agent for excess SecY in the cell or as a regulatory factor that negatively controls the translocase function. The protein is Protein Syd of Colwellia psychrerythraea (strain 34H / ATCC BAA-681) (Vibrio psychroerythus).